We begin with the raw amino-acid sequence, 247 residues long: V-type proton ATPase subunit D (247 aa).

Belongs to the V-ATPase D subunit family. In terms of assembly, V-ATPase is a heteromultimeric enzyme made up of two complexes: the ATP-hydrolytic V1 complex and the proton translocation V0 complex. The V1 complex consists of three catalytic AB heterodimers that form a heterohexamer, three peripheral stalks each consisting of EG heterodimers, one central rotor including subunits D and F, and the regulatory subunits C and H. The proton translocation complex V0 consists of the proton transport subunit a, a ring of proteolipid subunits c9c'', rotary subunit d, subunits e and f, and the accessory subunits ATP6AP1/Ac45 and ATP6AP2/PRR. Interacts with SNX10.

It localises to the membrane. The protein localises to the cytoplasmic vesicle. The protein resides in the clathrin-coated vesicle membrane. It is found in the cytoplasm. Its subcellular location is the cytoskeleton. It localises to the microtubule organizing center. The protein localises to the centrosome. The protein resides in the cell projection. It is found in the cilium. Its function is as follows. Subunit of the V1 complex of vacuolar(H+)-ATPase (V-ATPase), a multisubunit enzyme composed of a peripheral complex (V1) that hydrolyzes ATP and a membrane integral complex (V0) that translocates protons. V-ATPase is responsible for acidifying and maintaining the pH of intracellular compartments and in some cell types, is targeted to the plasma membrane, where it is responsible for acidifying the extracellular environment. May play a role in cilium biogenesis through regulation of the transport and the localization of proteins to the cilium. The protein is V-type proton ATPase subunit D (ATP6V1D) of Oryctolagus cuniculus (Rabbit).